We begin with the raw amino-acid sequence, 185 residues long: GTP-binding protein rhb1 (185 aa).

Ser-16, Gly-18, Lys-19, Ser-20, Ser-21, Val-32, Tyr-35, Thr-38, Asn-119, Asp-122, and Ala-150 together coordinate GTP. Residue Ser-20 coordinates Mg(2+). An Effector region motif is present at residues 35 to 43 (YYPTIENTF). Position 38 (Thr-38) interacts with Mg(2+). Cys-182 carries the cysteine methyl ester modification. Residue Cys-182 is the site of S-farnesyl cysteine attachment. The propeptide at 183-185 (VIA) is removed in mature form.

The protein belongs to the small GTPase superfamily. Rheb family.

Its subcellular location is the cell membrane. It carries out the reaction GTP + H2O = GDP + phosphate + H(+). Its function is as follows. Binds GTP and exhibits intrinsic GTPase activity. Regulates entry into stationary phase when extracellular nitrogen levels are adequate for growth. The chain is GTP-binding protein rhb1 (rhb1) from Schizosaccharomyces pombe (strain 972 / ATCC 24843) (Fission yeast).